Here is a 375-residue protein sequence, read N- to C-terminus: Chaperone protein DnaJ (375 aa).

Residues 5–70 enclose the J domain; it reads DYYELLGISR…EKRAAYDQYG (66 aa). The CR-type zinc finger occupies 132 to 210; the sequence is GTTKDIKIHT…CHGDGRVNKA (79 aa). Zn(2+)-binding residues include cysteine 145, cysteine 148, cysteine 162, cysteine 165, cysteine 184, cysteine 187, cysteine 198, and cysteine 201. CXXCXGXG motif repeat units lie at residues 145–152, 162–169, 184–191, and 198–205; these read CDTCHGTG, CPHCHGAG, CHFCHGTG, and CKTCHGDG.

The protein belongs to the DnaJ family. Homodimer. Zn(2+) is required as a cofactor.

It localises to the cytoplasm. Participates actively in the response to hyperosmotic and heat shock by preventing the aggregation of stress-denatured proteins and by disaggregating proteins, also in an autonomous, DnaK-independent fashion. Unfolded proteins bind initially to DnaJ; upon interaction with the DnaJ-bound protein, DnaK hydrolyzes its bound ATP, resulting in the formation of a stable complex. GrpE releases ADP from DnaK; ATP binding to DnaK triggers the release of the substrate protein, thus completing the reaction cycle. Several rounds of ATP-dependent interactions between DnaJ, DnaK and GrpE are required for fully efficient folding. Also involved, together with DnaK and GrpE, in the DNA replication of plasmids through activation of initiation proteins. This is Chaperone protein DnaJ from Aggregatibacter actinomycetemcomitans (Actinobacillus actinomycetemcomitans).